Here is a 157-residue protein sequence, read N- to C-terminus: Lipoprotein signal peptidase (157 aa).

A run of 3 helical transmembrane segments spans residues 10–30 (LIFIVVFSLIFGTDQAIKYAI), 58–78 (FLEGGLKYLQILLILGLFIFL), and 84–104 (LFKNHAIEFGMVFGAGVSNVL). Catalysis depends on residues aspartate 114 and aspartate 131. Residues 122 to 142 (FDFAIFNFADVMIDVGVGVLL) form a helical membrane-spanning segment.

The protein belongs to the peptidase A8 family.

The protein localises to the cell inner membrane. It carries out the reaction Release of signal peptides from bacterial membrane prolipoproteins. Hydrolyzes -Xaa-Yaa-Zaa-|-(S,diacylglyceryl)Cys-, in which Xaa is hydrophobic (preferably Leu), and Yaa (Ala or Ser) and Zaa (Gly or Ala) have small, neutral side chains.. Its pathway is protein modification; lipoprotein biosynthesis (signal peptide cleavage). In terms of biological role, this protein specifically catalyzes the removal of signal peptides from prolipoproteins. The sequence is that of Lipoprotein signal peptidase from Helicobacter pylori (strain Shi470).